A 538-amino-acid chain; its full sequence is Syncytin-2 (538 aa).

The signal sequence occupies residues 1 to 15 (MGLLLLVLILTPLLA). Residues 16-478 (AHRHPDFPLL…GWLNWEGTWK (463 aa)) lie on the Extracellular side of the membrane. Residues 43-46 (CWLC) carry the CXXC motif. 3 cysteine pairs are disulfide-bonded: C43-C46, C43-C439, and C431-C438. Residues N133, N146, N177, N220, N241, N247, N312, and N332 are each glycosylated (N-linked (GlcNAc...) asparagine). Residues 354 to 374 (FIPLLAGLGIIAGTGTGIAGI) form a fusion peptide region. Positions 414–430 (LQNRRGLDMLTAAQGGI) match the CKS-17 motif. Positions 431 to 439 (CLALDEKCC) match the CX6CC motif. An N-linked (GlcNAc...) asparagine glycan is attached at N443. Residues 479-499 (WFSWVLPFTGPLVSLLLLLLF) form a helical membrane-spanning segment. Residues 500–538 (GPCLLNLITQFVLSRLQAIKLQTNLSAGCRPHNIQESPF) lie on the Cytoplasmic side of the membrane.

This sequence belongs to the gamma type-C retroviral envelope protein family. HERV class-I FRD env subfamily. The surface and transmembrane proteins form a heterodimer. They are attached by non-covalent interactions or by a labile interchain disulfide bond. Specific enzymatic cleavages in vivo yield the mature SU and TM proteins. In terms of processing, the CXXC motif is highly conserved across a broad range of retroviral envelope proteins. It is thought to participate in the formation of a labile disulfide bond possibly with the CX6CC motif present in the transmembrane protein.

It localises to the virion. It is found in the cell membrane. Functionally, this endogenous retroviral envelope protein has retained its original fusogenic properties and participates in trophoblast fusion and the formation of a syncytium during placenta morphogenesis. The interaction with MFSD2A is apparently important for this process. Endogenous envelope proteins may have kept, lost or modified their original function during evolution but this one can still make pseudotypes with MLV, HIV-1 or SIV-1 virions and confer infectivity. Retroviral envelope proteins mediate receptor recognition and membrane fusion during early infection. The surface protein mediates receptor recognition, while the transmembrane protein anchors the envelope heterodimer to the viral membrane through one transmembrane domain. The other hydrophobic domain, called fusion peptide, mediates fusion of the viral membrane with the target cell membrane. The sequence is that of Syncytin-2 (ERVFRD-1) from Pongo pygmaeus (Bornean orangutan).